The following is a 536-amino-acid chain: Phosphoenolpyruvate carboxykinase (ATP) (536 aa).

The substrate site is built by Arg-61, Tyr-195, and Lys-201. Residues Lys-201, His-220, and 236–244 contribute to the ATP site; that span reads GLSGTGKTT. The Mn(2+) site is built by Lys-201 and His-220. Asp-257 contributes to the Mn(2+) binding site. ATP contacts are provided by Glu-285, Arg-322, and Thr-447. Arg-322 is a substrate binding site.

The protein belongs to the phosphoenolpyruvate carboxykinase (ATP) family. Requires Mn(2+) as cofactor.

The protein resides in the cytoplasm. The enzyme catalyses oxaloacetate + ATP = phosphoenolpyruvate + ADP + CO2. The protein operates within carbohydrate biosynthesis; gluconeogenesis. Involved in the gluconeogenesis. Catalyzes the conversion of oxaloacetate (OAA) to phosphoenolpyruvate (PEP) through direct phosphoryl transfer between the nucleoside triphosphate and OAA. In Agrobacterium fabrum (strain C58 / ATCC 33970) (Agrobacterium tumefaciens (strain C58)), this protein is Phosphoenolpyruvate carboxykinase (ATP).